A 185-amino-acid chain; its full sequence is Ribosome-recycling factor (185 aa).

A compositionally biased stretch (basic and acidic residues) spans 131–155; sequence DRKNANDKIKKSEKDKEITADESKS. A disordered region spans residues 131 to 156; the sequence is DRKNANDKIKKSEKDKEITADESKSA.

It belongs to the RRF family.

It is found in the cytoplasm. Functionally, responsible for the release of ribosomes from messenger RNA at the termination of protein biosynthesis. May increase the efficiency of translation by recycling ribosomes from one round of translation to another. The polypeptide is Ribosome-recycling factor (Sulfurimonas denitrificans (strain ATCC 33889 / DSM 1251) (Thiomicrospira denitrificans (strain ATCC 33889 / DSM 1251))).